Here is an 851-residue protein sequence, read N- to C-terminus: Probable disease resistance protein At1g15890 (851 aa).

In terms of domain architecture, NB-ARC spans 139–441 (AEKIPAPKVE…CEGFIDGNED (303 aa)). 181–188 (GMGGVGKT) provides a ligand contact to ATP. 5 LRR repeats span residues 514–535 (SLRR…SNSP), 536–557 (NLST…FFRF), 560–582 (ALVV…ISKL), 584–605 (SLQY…FKEL), and 607–629 (KLIH…ATSL).

This sequence belongs to the disease resistance NB-LRR family.

Probable disease resistance protein. This chain is Probable disease resistance protein At1g15890, found in Arabidopsis thaliana (Mouse-ear cress).